Consider the following 339-residue polypeptide: Ketol-acid reductoisomerase (NADP(+)) (339 aa).

Positions 1 to 182 constitute a KARI N-terminal Rossmann domain; sequence MRVYYDRDAD…GGGRSGIIET (182 aa). NADP(+) contacts are provided by residues 24–27, arginine 48, serine 51, threonine 53, and 83–86; these read YGSQ and DEHQ. Residue histidine 108 is part of the active site. Residue glycine 134 coordinates NADP(+). The 146-residue stretch at 183-328 folds into the KARI C-terminal knotted domain; the sequence is NFREECETDL…ARLRGMMPWI (146 aa). Mg(2+) contacts are provided by aspartate 191, glutamate 195, glutamate 227, and glutamate 231. Substrate is bound at residue serine 252.

It belongs to the ketol-acid reductoisomerase family. Mg(2+) is required as a cofactor.

It catalyses the reaction (2R)-2,3-dihydroxy-3-methylbutanoate + NADP(+) = (2S)-2-acetolactate + NADPH + H(+). The enzyme catalyses (2R,3R)-2,3-dihydroxy-3-methylpentanoate + NADP(+) = (S)-2-ethyl-2-hydroxy-3-oxobutanoate + NADPH + H(+). Its pathway is amino-acid biosynthesis; L-isoleucine biosynthesis; L-isoleucine from 2-oxobutanoate: step 2/4. The protein operates within amino-acid biosynthesis; L-valine biosynthesis; L-valine from pyruvate: step 2/4. Functionally, involved in the biosynthesis of branched-chain amino acids (BCAA). Catalyzes an alkyl-migration followed by a ketol-acid reduction of (S)-2-acetolactate (S2AL) to yield (R)-2,3-dihydroxy-isovalerate. In the isomerase reaction, S2AL is rearranged via a Mg-dependent methyl migration to produce 3-hydroxy-3-methyl-2-ketobutyrate (HMKB). In the reductase reaction, this 2-ketoacid undergoes a metal-dependent reduction by NADPH to yield (R)-2,3-dihydroxy-isovalerate. In Caulobacter vibrioides (strain ATCC 19089 / CIP 103742 / CB 15) (Caulobacter crescentus), this protein is Ketol-acid reductoisomerase (NADP(+)).